The primary structure comprises 388 residues: Oligogalacturonate lyase (388 aa).

The protein localises to the periplasm. The enzyme catalyses 4-(4-deoxy-alpha-D-galact-4-enuronosyl)-D-galacturonate = 2 5-dehydro-4-deoxy-D-glucuronate. Its pathway is glycan metabolism; pectin degradation; 2-dehydro-3-deoxy-D-gluconate from pectin: step 3/5. Its function is as follows. Involved in degradation of pectin, which causes soft-rod disease in plants. This chain is Oligogalacturonate lyase (ogl), found in Dickeya dadantii (strain 3937) (Erwinia chrysanthemi (strain 3937)).